The primary structure comprises 148 residues: UPAR/Ly6 domain-containing protein bero (148 aa).

Positions Met-1–Ala-23 are cleaved as a signal peptide. Cystine bridges form between Cys-26–Cys-72, Cys-29–Cys-37, Cys-51–Cys-90, Cys-102–Cys-116, and Cys-119–Cys-124. Residue Asn-68 is glycosylated (N-linked (GlcNAc...) asparagine). N-linked (GlcNAc...) asparagine glycosylation occurs at Asn-125. The GPI-anchor amidated asparagine moiety is linked to residue Asn-125. Positions Gly-126–Ala-148 are cleaved as a propeptide — removed in mature form. A helical membrane pass occupies residues Ser-128–Ala-148.

Belongs to the quiver family.

It is found in the cell membrane. The protein localises to the membrane. It localises to the perikaryon. The protein resides in the cell projection. Its subcellular location is the neuron projection. Functionally, necessary for the maintenance of persistent fluctuating activities and suppression of acute evoked activities in abdominal leucokinin-producing (ABLK) neurons to negatively regulate neuron excitability involved in nociceptive (perception of pain) behavioral responses. The polypeptide is UPAR/Ly6 domain-containing protein bero (Drosophila melanogaster (Fruit fly)).